The sequence spans 155 residues: Ribosome maturation factor RimP (155 aa).

This sequence belongs to the RimP family.

It localises to the cytoplasm. Its function is as follows. Required for maturation of 30S ribosomal subunits. The sequence is that of Ribosome maturation factor RimP from Hamiltonella defensa subsp. Acyrthosiphon pisum (strain 5AT).